A 50-amino-acid chain; its full sequence is Protein PsbN (50 aa).

A helical membrane pass occupies residues 14–34 (IAVTILALLLALTGFGLWTAF).

The protein belongs to the PsbN family.

The protein localises to the cellular thylakoid membrane. May play a role in photosystem I and II biogenesis. The polypeptide is Protein PsbN (Prochlorococcus marinus (strain MIT 9301)).